The following is a 295-amino-acid chain: G1/S-specific cyclin-D1 (295 aa).

The region spanning 28-152 (LRAMLKAEET…VLVNKLKWNL (125 aa)) is the Cyclin N-terminal domain. The disordered stretch occupies residues 264-295 (QQNLDPKAAEEEEEEEEVDLACTPTDVRDVNI). A Glycyl lysine isopeptide (Lys-Gly) (interchain with G-Cter in ubiquitin) cross-link involves residue K270. The segment covering 273-282 (EEEEEEEEVD) has biased composition (acidic residues). T286 bears the Phosphothreonine mark.

It belongs to the cyclin family. Cyclin D subfamily. Interacts with either CDK4 or CDK6 protein kinase to form a serine/threonine kinase holoenzyme complex. The cyclin subunit imparts substrate specificity to the complex. Component of the ternary complex CCND1/CDK4/CDKN1B required for nuclear translocation and modulation of CDK4-mediated kinase activity. Interacts directly with CDKN1B. Can form similar complexes with either CDKN1A or CDKN2A. Interacts with UHRF2; the interaction ubiquitinates CCND1 and appears to occur independently of phosphorylation. Interacts with USP2. Interacts (via cyclin N-terminal domain) with INSM1 (via N-terminal region); the interaction competes with the binding of CCND1 to CDK4 during cell cycle progression and inhibits CDK4 activity. Interacts with CDK4; the interaction is prevented with the binding of CCND1 to INSM1 during cell cycle progression. Post-translationally, phosphorylation at Thr-286 by MAP kinases is required for ubiquitination and degradation by the DCX(AMBRA1) complex. It also plays an essential role for recognition by the FBXO31 component of SCF (SKP1-cullin-F-box) protein ligase complex following DNA damage. In terms of processing, ubiquitinated at Lys-270 by the DCX(AMBRA1) complex during the transition from G1 to S cell phase, leading to its degradation: ubiquitination is dependent on Thr-286 phosphorylation. The DCX(AMBRA1) complex represents the major regulator of CCND1 stability during the G1/S transition. Also ubiquitinated by the SCF(FBXO4) and Cul7-RING(FBXW8) ubiquitin-protein ligase complexes. Following DNA damage it is ubiquitinated by the SCF(FBXO31) protein ligase complex. SCF(FBXO31) ubiquitination is dependent on Thr-286 phosphorylation. Ubiquitinated also by UHRF2 apparently in a phosphorylation-independent manner. Ubiquitination leads to its degradation and G1 arrest. Deubiquitinated by USP2; leading to its stabilization.

Its subcellular location is the nucleus. It is found in the cytoplasm. The protein localises to the nucleus membrane. In terms of biological role, regulatory component of the cyclin D1-CDK4 (DC) complex that phosphorylates and inhibits members of the retinoblastoma (RB) protein family including RB1 and regulates the cell-cycle during G(1)/S transition. Phosphorylation of RB1 allows dissociation of the transcription factor E2F from the RB/E2F complex and the subsequent transcription of E2F target genes which are responsible for the progression through the G(1) phase. Hypophosphorylates RB1 in early G(1) phase. Cyclin D-CDK4 complexes are major integrators of various mitogenenic and antimitogenic signals. Also a substrate for SMAD3, phosphorylating SMAD3 in a cell-cycle-dependent manner and repressing its transcriptional activity. Component of the ternary complex, cyclin D1/CDK4/CDKN1B, required for nuclear translocation and activity of the cyclin D-CDK4 complex. Exhibits transcriptional corepressor activity with INSM1 on the NEUROD1 and INS promoters in a cell cycle-independent manner. The protein is G1/S-specific cyclin-D1 (CCND1) of Bos taurus (Bovine).